Here is a 279-residue protein sequence, read N- to C-terminus: DNA repair protein RecO (279 aa).

The protein belongs to the RecO family.

Involved in DNA repair and RecF pathway recombination. This is DNA repair protein RecO from Thermosynechococcus vestitus (strain NIES-2133 / IAM M-273 / BP-1).